The following is a 647-amino-acid chain: MVPSLLLLLTGLFRATEPAPRCETGQETLGQCQTAQKAKCVDISLSSCTDVTYTQTMYPNFLDQKSREVIEYSSEYILISVLHNLLQGECNPDLRLLGCSVLAPQCEKDKVIKPCRHVCENLKKNCLSAFDAIDMAWPYFLDCDRFFAGEEEGCFDPLAKLRGEVAVEEDLPSDFPATFIQFKHHSYSQMVSTLKKTASRCSHIATTYSIGRSFEGKDLFVIEFSTKPGHHELLKPEFKYIGNMHGNEVVGKELLYTLRSICVQKYLLGNPRIQTLINNTRIHLLPSLNPDGYERAAEEGAGYNGWVIGRQTAQNLDLNRNFPDLTSEAYRRAGIRGARLDHIPIPQSYWWGKVAPETKAVMKWMRSIPFVLSASLHGGELVVTYPYDYSRHPMEEKEFSPTPDEKMFKMLAKAYADAHPVISDRSEHRCGGNFVKRGGIINGAEWYSFTGGMADFNYLHTNCFEVTVEVGCEKFPLEEELFTIWHENRDALLNYMEMVHRGIKGIVSDKFGNPIKNARISVRGIQHDITTAADGDYWRLLPPGTYIVTAQAMGYTKVMKRVTLPIKMKRAGRVDFVLRPIEIWPNKLLRRPMEDMYDQYDPLELFDPHAQHAQARGGSQQVREKPWWWSYFSSLDLHKPLWLLKQH.

The N-terminal stretch at M1–P18 is a signal peptide. The region spanning A35–P157 is the FZ domain. Cystine bridges form between C40/C106, C48/C99, C90/C126, C115/C154, and C119/C143. The Peptidase M14 domain maps to K183 to V499. Zn(2+)-binding residues include H245 and E248. N-linked (GlcNAc...) asparagine glycosylation is present at N278. H377 lines the Zn(2+) pocket. Catalysis depends on E469, which acts as the Proton donor/acceptor.

Belongs to the peptidase M14 family. As to quaternary structure, interacts with WNT4 vie its FZ domain. Zn(2+) is required as a cofactor. As to expression, in the early embryo it is initially expressed throughout the somites and subsequently becomes restricted to the sclerotome. Expressed in somites, paraxial head mesoderm and apical ectodermal ridge.

Its subcellular location is the secreted. The protein resides in the extracellular space. It localises to the extracellular matrix. With respect to regulation, inhibited by 2-mercaptomethyl-3-guanidinoethylthiopropanoic acid (MGTA) and guanidinoethylmercaptosuccinic acid (GEMSA). Inhibited by chelating agents such as EDTA and EGTA. Its function is as follows. Cleaves substrates with C-terminal arginine residues. Modulates the Wnt signaling pathway, probably by cleaving some undefined protein. Regulates the development of skeletal elements during development, probably by activating WNT4. This chain is Carboxypeptidase Z (CPZ), found in Gallus gallus (Chicken).